Here is a 52-residue protein sequence, read N- to C-terminus: MAGNRSIITLECKTCKERNYTTTKNKKKTQDKLALSKFCPRCRKHVDHKETK.

This sequence belongs to the bacterial ribosomal protein bL33 family.

The chain is Large ribosomal subunit protein bL33 from Anaeromyxobacter sp. (strain Fw109-5).